The following is a 292-amino-acid chain: Hemin import ATP-binding protein HmuV (292 aa).

The 234-residue stretch at 38-271 (LRADGIAVTR…ELLTRVYGHP (234 aa)) folds into the ABC transporter domain. 70–77 (GPNGAGKS) provides a ligand contact to ATP.

It belongs to the ABC transporter superfamily. Heme (hemin) importer (TC 3.A.1.14.5) family. As to quaternary structure, the complex is composed of two ATP-binding proteins (HmuV), two transmembrane proteins (HmuU) and a solute-binding protein (HmuT).

The protein resides in the cell membrane. Functionally, part of the ABC transporter complex HmuTUV involved in hemin import. Responsible for energy coupling to the transport system. The protein is Hemin import ATP-binding protein HmuV of Rhodococcus jostii (strain RHA1).